A 275-amino-acid polypeptide reads, in one-letter code: Large ribosomal subunit protein uL2c (275 aa).

Residues 225-259 (KNPVDHPHGGGEGRAPIGRSTPVTPWGKPALGRRT) form a disordered region.

It belongs to the universal ribosomal protein uL2 family. Part of the 50S ribosomal subunit.

Its subcellular location is the plastid. The protein localises to the cyanelle. The sequence is that of Large ribosomal subunit protein uL2c (rpl2) from Cyanophora paradoxa.